Reading from the N-terminus, the 495-residue chain is Probable cobyric acid synthase (495 aa).

The region spanning 256 to 441 (DVDIAVIRLT…LHGLFDNVNI (186 aa)) is the GATase cobBQ-type domain. The Nucleophile role is filled by C334. Residue H433 is part of the active site.

Belongs to the CobB/CobQ family. CobQ subfamily.

Its pathway is cofactor biosynthesis; adenosylcobalamin biosynthesis. Functionally, catalyzes amidations at positions B, D, E, and G on adenosylcobyrinic A,C-diamide. NH(2) groups are provided by glutamine, and one molecule of ATP is hydrogenolyzed for each amidation. In Methanococcoides burtonii (strain DSM 6242 / NBRC 107633 / OCM 468 / ACE-M), this protein is Probable cobyric acid synthase.